Consider the following 109-residue polypeptide: UPF0122 protein Cbei_1174 (109 aa).

Belongs to the UPF0122 family.

Might take part in the signal recognition particle (SRP) pathway. This is inferred from the conservation of its genetic proximity to ftsY/ffh. May be a regulatory protein. The sequence is that of UPF0122 protein Cbei_1174 from Clostridium beijerinckii (strain ATCC 51743 / NCIMB 8052) (Clostridium acetobutylicum).